The primary structure comprises 262 residues: Ninja-family protein 3 (262 aa).

The segment at 48–69 is disordered; that stretch reads RRNSLTCNTSKEAAGQSPEEMN.

This sequence belongs to the Ninja family.

It is found in the nucleus. In Zea mays (Maize), this protein is Ninja-family protein 3.